Here is an 835-residue protein sequence, read N- to C-terminus: Protein translocase subunit SecA (835 aa).

Residues Q85, 103 to 107 (GEGKT), and D495 contribute to the ATP site. Residues 806 to 835 (KVFLNNDSSDDESSKKRRTRKVRTSKKPWN) are disordered. Over residues 820–835 (KKRRTRKVRTSKKPWN) the composition is skewed to basic residues.

The protein belongs to the SecA family. In terms of assembly, monomer and homodimer. Part of the essential Sec protein translocation apparatus which comprises SecA, SecYEG and auxiliary proteins SecDF. Other proteins may also be involved.

The protein resides in the cell membrane. It is found in the cytoplasm. The catalysed reaction is ATP + H2O + cellular proteinSide 1 = ADP + phosphate + cellular proteinSide 2.. In terms of biological role, part of the Sec protein translocase complex. Interacts with the SecYEG preprotein conducting channel. Has a central role in coupling the hydrolysis of ATP to the transfer of proteins into and across the cell membrane, serving as an ATP-driven molecular motor driving the stepwise translocation of polypeptide chains across the membrane. The polypeptide is Protein translocase subunit SecA (Onion yellows phytoplasma (strain OY-M)).